Reading from the N-terminus, the 86-residue chain is Acyl carrier protein (86 aa).

A Carrier domain is found at 10 to 85 (DKIEQKVIEM…DVIKYIKERQ (76 aa)). At Ser-45 the chain carries O-(pantetheine 4'-phosphoryl)serine.

The protein belongs to the acyl carrier protein (ACP) family. Post-translationally, 4'-phosphopantetheine is transferred from CoA to a specific serine of apo-ACP by AcpS. This modification is essential for activity because fatty acids are bound in thioester linkage to the sulfhydryl of the prosthetic group.

It is found in the cytoplasm. It participates in lipid metabolism; fatty acid biosynthesis. Its function is as follows. Carrier of the growing fatty acid chain in fatty acid biosynthesis. The protein is Acyl carrier protein of Rickettsia africae (strain ESF-5).